The chain runs to 1034 residues: FACT complex subunit spt-16 (1034 aa).

Basic and acidic residues-rich tracts occupy residues 433–448, 463–481, and 493–503; these read EEQE…DQKK, TRNK…KELG, and SKQDGGTDEKK. The tract at residues 433–511 is disordered; it reads EEQENRETER…KKVKKSNVSY (79 aa). Residues 617-642 are a coiled coil; it reads LSTAFRQIKEMQKRFRTEEAEEREKD. Composition is skewed to acidic residues over residues 926–950 and 959–983; these read AESE…EADA and SDED…DSDE. Residues 926-1034 form a disordered region; sequence AESEGEDAGD…KAGPSHKRRK (109 aa). The segment covering 984–1020 has biased composition (basic and acidic residues); sequence SEGKDWSDLEEEAAKADKRREVEDGGRDRDRDRDRKR. Residues 1021–1034 show a composition bias toward basic residues; sequence PSSSKAGPSHKRRK.

The protein belongs to the peptidase M24 family. SPT16 subfamily. In terms of assembly, component of the FACT complex, a stable heterodimer of spt-16 and hmg-3 or hmg-4.

The protein localises to the nucleus. It is found in the chromosome. Functionally, component of the FACT complex, a general chromatin factor that acts to reorganize nucleosomes. The FACT complex is involved in multiple processes that require DNA as a template such as mRNA elongation, DNA replication and DNA repair. During transcription elongation the FACT complex acts as a histone chaperone that both destabilizes and restores nucleosomal structure. It facilitates the passage of RNA polymerase II and transcription by promoting the dissociation of one histone H2A-H2B dimer from the nucleosome, then subsequently promotes the reestablishment of the nucleosome following the passage of RNA polymerase II. The protein is FACT complex subunit spt-16 (spt-16) of Caenorhabditis briggsae.